The sequence spans 501 residues: Eukaryotic translation initiation factor 3 subunit E (501 aa).

Positions 245 to 423 (CDLFFYTPYL…ESIESTSTNV (179 aa)) constitute a PCI domain. Phosphoserine occurs at positions 477 and 479.

This sequence belongs to the eIF-3 subunit E family. As to quaternary structure, component of the eukaryotic translation initiation factor 3 (eIF-3) complex. The eIF-3 complex appears to include tif32/eif3a, SPAC25G10.08/eif3b, tif33/eif3c, SPBC4C3.07/eif3f, tif35/eif3g and sum1/eif3i. This set of common subunits may also associate exclusively with either moe1/eif3d and int6/eif3e, or with SPAC821.05/eif3h and SPAC1751.03/eif3m. The eIF-3 complex may also include SPAC3A12.13c/eif3j. Also interacts with the proteasome via rpn501/rpn502.

The protein resides in the cytoplasm. Functionally, component of the eukaryotic translation initiation factor 3 (eIF-3) complex, which is involved in protein synthesis of a specialized repertoire of mRNAs and, together with other initiation factors, stimulates binding of mRNA and methionyl-tRNAi to the 40S ribosome. The eIF-3 complex specifically targets and initiates translation of a subset of mRNAs involved in cell proliferation (Potential). Required for maintaining the basal level of atf1 and for transcriptional activation of core environmental stress response genes (CESR genes) in response to histidine starvation. May positively regulate proteasome activity. Required for nuclear localization of the proteasome subunit rpn501/rpn502. This is Eukaryotic translation initiation factor 3 subunit E (int6) from Schizosaccharomyces pombe (strain 972 / ATCC 24843) (Fission yeast).